The chain runs to 338 residues: Glyceraldehyde-3-phosphate dehydrogenase 2 (338 aa).

NAD(+) contacts are provided by residues 11 to 12, Asp33, and Arg78; that span reads RI. D-glyceraldehyde 3-phosphate is bound by residues 149–151, Thr180, 209–210, and Arg232; these read SCT and TG. Cys150 (nucleophile) is an active-site residue. Position 314 (Asn314) interacts with NAD(+).

Belongs to the glyceraldehyde-3-phosphate dehydrogenase family. In terms of assembly, homotetramer.

The protein resides in the cytoplasm. It catalyses the reaction D-glyceraldehyde 3-phosphate + phosphate + NAD(+) = (2R)-3-phospho-glyceroyl phosphate + NADH + H(+). It functions in the pathway carbohydrate degradation; glycolysis; pyruvate from D-glyceraldehyde 3-phosphate: step 1/5. This is Glyceraldehyde-3-phosphate dehydrogenase 2 (gpd2) from Agaricus bisporus (White button mushroom).